The sequence spans 58 residues: Ribulose bisphosphate carboxylase large chain (58 aa).

Positions 1–2 (MS) are excised as a propeptide. An N-acetylproline modification is found at proline 3. Lysine 14 is modified (N6,N6,N6-trimethyllysine).

It belongs to the RuBisCO large chain family. Type I subfamily. As to quaternary structure, heterohexadecamer of 8 large chains and 8 small chains.

The protein localises to the plastid. The protein resides in the chloroplast. The enzyme catalyses 2 (2R)-3-phosphoglycerate + 2 H(+) = D-ribulose 1,5-bisphosphate + CO2 + H2O. It catalyses the reaction D-ribulose 1,5-bisphosphate + O2 = 2-phosphoglycolate + (2R)-3-phosphoglycerate + 2 H(+). Its function is as follows. RuBisCO catalyzes two reactions: the carboxylation of D-ribulose 1,5-bisphosphate, the primary event in carbon dioxide fixation, as well as the oxidative fragmentation of the pentose substrate in the photorespiration process. Both reactions occur simultaneously and in competition at the same active site. This Euphorbia characias (Albanian spurge) protein is Ribulose bisphosphate carboxylase large chain (rbcL).